Consider the following 373-residue polypeptide: tRNA pseudouridine synthase Pus10 (373 aa).

Asp-197 acts as the Nucleophile in catalysis. The substrate site is built by Tyr-265 and Tyr-336.

It belongs to the pseudouridine synthase Pus10 family.

It catalyses the reaction uridine(54) in tRNA = pseudouridine(54) in tRNA. The enzyme catalyses uridine(55) in tRNA = pseudouridine(55) in tRNA. Responsible for synthesis of pseudouridine from uracil-54 and uracil-55 in the psi GC loop of transfer RNAs. The chain is tRNA pseudouridine synthase Pus10 from Korarchaeum cryptofilum (strain OPF8).